The following is a 264-amino-acid chain: Adenosylcobinamide-GDP ribazoletransferase (264 aa).

7 helical membrane-spanning segments follow: residues leucine 10–threonine 30, leucine 43–tryptophan 63, leucine 113–tyrosine 133, valine 141–leucine 161, valine 183–tryptophan 203, leucine 205–phenylalanine 225, and glycine 243–phenylalanine 263.

This sequence belongs to the CobS family. It depends on Mg(2+) as a cofactor.

The protein localises to the cell inner membrane. The catalysed reaction is alpha-ribazole + adenosylcob(III)inamide-GDP = adenosylcob(III)alamin + GMP + H(+). The enzyme catalyses alpha-ribazole 5'-phosphate + adenosylcob(III)inamide-GDP = adenosylcob(III)alamin 5'-phosphate + GMP + H(+). Its pathway is cofactor biosynthesis; adenosylcobalamin biosynthesis; adenosylcobalamin from cob(II)yrinate a,c-diamide: step 7/7. Joins adenosylcobinamide-GDP and alpha-ribazole to generate adenosylcobalamin (Ado-cobalamin). Also synthesizes adenosylcobalamin 5'-phosphate from adenosylcobinamide-GDP and alpha-ribazole 5'-phosphate. The chain is Adenosylcobinamide-GDP ribazoletransferase from Leptothrix cholodnii (strain ATCC 51168 / LMG 8142 / SP-6) (Leptothrix discophora (strain SP-6)).